A 139-amino-acid chain; its full sequence is Putative lipoprotein MIP_01412 (139 aa).

The signal sequence occupies residues 1-19 (MRNRTVAAGAVLTAALLGA). Residue Cys-20 is the site of N-palmitoyl cysteine attachment. Cys-20 is lipidated: S-diacylglycerol cysteine.

This sequence belongs to the mycobacterial 19 kDa antigen family.

It localises to the cell membrane. The polypeptide is Putative lipoprotein MIP_01412 (Mycobacterium indicus pranii (strain DSM 45239 / MTCC 9506)).